The sequence spans 945 residues: Endo-1,4-beta-xylanase 1 (945 aa).

Positions 16–41 are enriched in basic and acidic residues; sequence NGDRNPDKKSRESMEVSRKDNEEPEK. Residues 16 to 50 form a disordered region; the sequence is NGDRNPDKKSRESMEVSRKDNEEPEKQNNNNVASI. 3 CBM-cenC domains span residues 57-197, 227-362, and 397-541; these read NVIV…EGPS, IVVN…IEGP, and NILT…GPSS. Residues N86, N239, N305, N349, N417, N453, and N687 are each glycosylated (N-linked (GlcNAc...) asparagine). The region spanning 589–884 is the GH10 domain; it reads SGASVRVRQI…NEAGKRFLAV (296 aa). The active-site Proton donor is E718. E819 acts as the Nucleophile in catalysis.

The protein belongs to the glycosyl hydrolase 10 (cellulase F) family. In terms of tissue distribution, predominantly expressed in vascular bundles, but not in vessel cells. Mostly expressed in stems, at lower levels in roots, and weakly in inflorescences and seedlings.

The protein resides in the secreted. Its subcellular location is the cell wall. The enzyme catalyses Endohydrolysis of (1-&gt;4)-beta-D-xylosidic linkages in xylans.. It participates in glycan degradation; xylan degradation. Its function is as follows. Binds to and hydrolyzes insoluble and soluble xylan substrates. Exhibits xylanase activity. The polypeptide is Endo-1,4-beta-xylanase 1 (Arabidopsis thaliana (Mouse-ear cress)).